A 2547-amino-acid chain; its full sequence is Piezo-type mechanosensitive ion channel component 1 (2547 aa).

Topologically, residues 1 to 12 (MEPHVLGAGLYW) are cytoplasmic. Residues 13-25 (LLLPCTLLAASLL) traverse the membrane as a helical segment. Residues 26–28 (RFN) lie on the Extracellular side of the membrane. A helical transmembrane segment spans residues 29–44 (ALSLVYLLFLLLLPWL). The Cytoplasmic segment spans residues 45–58 (PGPSRHSIPGHTGR). The chain crosses the membrane as a helical span at residues 59-81 (LLRALLCLSLLFLVAHLAFQICL). Over 82 to 121 (HTVPHLDQFLGQNGSLWVKVSQHIGVTRLDLKDIFNTTRL) the chain is Extracellular. A glycan (N-linked (GlcNAc...) asparagine) is linked at asparagine 94. The chain crosses the membrane as a helical span at residues 122-138 (VAPDLGVLLASSLCLGL). The Cytoplasmic segment spans residues 139 to 201 (CGRLTRKAGQ…ASRFRVTAHW (63 aa)). A helical membrane pass occupies residues 202–221 (LLMTSGRTLVIVLLALAGIA). At 222–223 (HP) the chain is on the extracellular side. Residues 224–243 (SAFSSIYLVVFLAICTWWSC) traverse the membrane as a helical segment. Residues 244–254 (HFPLSPLGFNT) lie on the Cytoplasmic side of the membrane. A helical membrane pass occupies residues 255-275 (LCVMVSCFGAGHLICLYCYQT). The Extracellular segment spans residues 276 to 316 (PFIQDMLPPGNIWARLFGLKNFVDLPNYSSPNALVLNTKHA). Residues 317 to 337 (WPIYVSPGILLLLYYTATSLL) traverse the membrane as a helical segment. Residues 338–424 (KLHKSCPSEL…EMSPLHGLGH (87 aa)) lie on the Cytoplasmic side of the membrane. Residues 347-387 (LRKETPREDEEHELELDHLEPEPQARDATQGEMPMTTEPDL) are disordered. The span at 361–371 (ELDHLEPEPQA) shows a compositional bias: basic and acidic residues. A helical transmembrane segment spans residues 425 to 445 (LIMDQSYVCALIAMMVWSIMY). Residues 446–447 (HS) are Extracellular-facing. The chain crosses the membrane as a helical span at residues 448–463 (WLTFVLLLWACLIWTV). At 464-468 (RSRHQ) the chain is on the cytoplasmic side. A helical transmembrane segment spans residues 469–491 (LAMLCSPCILLYGLTLCCLRYVW). The Extracellular segment spans residues 492–518 (AMELPELPTTLGPVSLHQLGLEHTRYP). The helical transmembrane segment at 519-536 (CLDLGAMLLYLLTFWLLL) threads the bilayer. Residues 537-580 (RQFVKEKLLKKQKVPAALLEVTVADTEPTQTQTLLRSLGELVTG) lie on the Cytoplasmic side of the membrane. The chain crosses the membrane as a helical span at residues 581–601 (IYVKYWIYVCAGMFIVVSFAG). Residue arginine 602 is a topological domain, extracellular. Residues 603-623 (LVVYKIVYMFLFLLCLTLFQV) form a helical membrane-spanning segment. The Cytoplasmic portion of the chain corresponds to 624-633 (YYTLWRKLLR). A helical transmembrane segment spans residues 634 to 655 (VFWWLVVAYTMLVLIAVYTFQF). Residues 656–685 (QDFPTYWRNLTGFTDEQLGDLGLEQFSVSE) lie on the Extracellular side of the membrane. Residues 686–702 (LFSSILIPGFFLLACIL) form a helical membrane-spanning segment. The Cytoplasmic segment spans residues 703–811 (QLHYFHRPFM…RRLLELHVFK (109 aa)). Serine 758 carries the post-translational modification Phosphoserine. Residues 812–823 (LVALYTVWVALK) form a helical membrane-spanning segment. The Extracellular segment spans residues 824–826 (EVS). The chain crosses the membrane as a helical span at residues 827 to 840 (VMNLLLVVLWAFAL). Topologically, residues 841 to 854 (PYPRFRPMASCLST) are cytoplasmic. Residues 855 to 869 (VWTCIIIVCKMLYQL) traverse the membrane as a helical segment. The Extracellular segment spans residues 870–921 (KIVNPHEYSSNCTEPFPNNTNLQPLEINQSLLYRGPVDPANWFGVRKGYPNL). Residues 922–949 (GYIQNHLQILLLLVFEAVVYRRQEHYRR) form a helical membrane-spanning segment. The Cytoplasmic portion of the chain corresponds to 950–989 (QHQQAPLPAQAVCADGTRQRLDQDLLSCLKYFINFFFYKF). A helical membrane pass occupies residues 990 to 1005 (GLEICFLMAVNVIGQR). Over 1006–1007 (MN) the chain is Extracellular. A helical membrane pass occupies residues 1008–1023 (FMVILHGCWLVAILTR). The Cytoplasmic portion of the chain corresponds to 1024-1036 (RRREAIARLWPNY). The chain crosses the membrane as a helical span at residues 1037 to 1052 (CLFLTLFLLYQYLLCL). Residues 1053–1091 (GMPPALCIDYPWRWSKAIPMNSALIKWLYLPDFFRAPNS) are Extracellular-facing. A helical transmembrane segment spans residues 1092-1113 (TNLISDFLLLLCASQQWQVFSA). At 1114–1148 (ERTEEWQRMAGINTDHLEPLRGEPNPIPNFIHCRS) the chain is on the cytoplasmic side. The chain crosses the membrane as a helical span at residues 1149-1175 (YLDMLKVAVFRYLFWLVLVVVFVAGAT). The Extracellular portion of the chain corresponds to 1176 to 1180 (RISIF). Residues 1181–1199 (GLGYLLACFYLLLFGTTLL) form a helical membrane-spanning segment. Residues 1200–1212 (QKDTRAQLVLWDC) are Cytoplasmic-facing. A helical membrane pass occupies residues 1213–1231 (LILYNVTVIISKNMLSLLS). Over 1232 to 1280 (CVFVEQMQSNFCWVIQLFSLVCTVKGYYDPKEMMTRDRDCLLPVEEAGI) the chain is Extracellular. The helical transmembrane segment at 1281–1297 (IWDSICFFFLLLQRRIF) threads the bilayer. At 1298–1656 (LSHYFLHVSA…ELLLDRRLHI (359 aa)) the chain is on the cytoplasmic side. Positions 1334-1365 (HRQIEEKSLAQLKRQMKRIRAKQEKYRQSQAS) form a coiled coil. 3 disordered regions span residues 1354–1396 (AKQE…RRQW), 1456–1480 (RRER…DVEP), and 1567–1610 (TLSG…NTRS). Positions 1361–1372 (QSQASRGQLQSK) are enriched in polar residues. The span at 1376 to 1392 (DPSQEPGPDSPGGSSPP) shows a compositional bias: low complexity. Phosphoserine occurs at positions 1385 and 1390. Residues 1592–1610 (SSMTDDTSSPLSTGYNTRS) show a composition bias toward polar residues. Residues serine 1627, serine 1631, and serine 1646 each carry the phosphoserine modification. Residues 1657–1700 (PELEEAERFEAQQGRTLRLLRAGYQCVAAHSELLCYFIIILNHM) form a helical membrane-spanning segment. Residues 1701-1704 (VTAS) lie on the Extracellular side of the membrane. Residues 1705–1720 (AASLVLPVLVFLWAML) traverse the membrane as a helical segment. Residues 1721–1728 (TIPRPSKR) lie on the Cytoplasmic side of the membrane. The chain crosses the membrane as a helical span at residues 1729 to 1747 (FWMTAIVFTEVMVVTKYLF). Topologically, residues 1748–1779 (QFGFFPWNSYVVLRRYENKPYFPPRILGLEKT) are extracellular. A helical transmembrane segment spans residues 1780–1801 (DSYIKYDLVQLMALFFHRSQLL). Residues 1802 to 1976 (CYGLWDHEED…HTKYRAATDV (175 aa)) are Cytoplasmic-facing. 2 stretches are compositionally biased toward basic and acidic residues: residues 1816 to 1837 (DHCR…KLES) and 1855 to 1880 (PRDH…DLKP). Residues 1816-1931 (DHCRSSVKDR…RPRHTQEKSK (116 aa)) form a disordered region. Over residues 1881–1894 (RHTRHISIRFRRRK) the composition is skewed to basic residues. A compositionally biased stretch (basic and acidic residues) spans 1912–1931 (GEGKETTERKRPRHTQEKSK). A helical transmembrane segment spans residues 1977 to 1996 (YALMFLADIVDIIIIIFGFW). Over 1997–2016 (AFGKHSAATDIASSLSDDQV) the chain is Extracellular. Residues 2017-2033 (PQAFLFMLLVQFGTMVI) traverse the membrane as a helical segment. At 2034–2047 (DRALYLRKTVLGKL) the chain is on the cytoplasmic side. A helical transmembrane segment spans residues 2048–2068 (AFQVVLVVAIHIWMFFILPAV). The Extracellular portion of the chain corresponds to 2069-2076 (TERMFSQN). A helical transmembrane segment spans residues 2077–2092 (AVAQLWYFVKCIYFAL). Residues 2093-2192 (SAYQIRCGYP…KKKIVKYGMG (100 aa)) are Cytoplasmic-facing. The helical transmembrane segment at 2193-2213 (GLIILFLIAIIWFPLLFMSLI) threads the bilayer. At 2214–2457 (RSVVGVVNQP…IFSDKVSPPS (244 aa)) the chain is on the extracellular side. Cysteine 2437 and cysteine 2441 are joined by a disulfide. Residues 2458–2478 (LGFLAGYGIVGLYVSIVLVVG) form a helical membrane-spanning segment. At 2479–2547 (KFVRGFFSEI…TMIKWTRERE (69 aa)) the chain is on the cytoplasmic side.

This sequence belongs to the PIEZO (TC 1.A.75) family. As to quaternary structure, homotrimer; the homotrimer forms a propeller-shaped Piezo channel with a cation-ion conducting pore. Heterotrimeric interaction may occur between PIEZO1 and PIEZO2. Interacts with PKD2. Interacts with STOMl3. Interacts with TMC1, TMC2, PCDG15 and CIB2; the interaction may be part of the MET complex. Interacts with MDFIC (via C-terminus); the interaction prolongs Piezo channel inactivation. Interacts with MDFI (via C-terminus); the interaction prolongs Piezo channel inactivation. Expressed in bladder, colon, kidney and skin. Also expressed in bone marrow, liver, lung, spleen and erythrocytes (at protein level). Expressed in myoblasts (at protein level). Expressed in red blood cells. Expressed in cochlear inner and outer hair cells (IHCs and OHCs) and vestibular organ HCs.

Its subcellular location is the endoplasmic reticulum membrane. The protein localises to the endoplasmic reticulum-Golgi intermediate compartment membrane. It is found in the cell membrane. It localises to the cell projection. The protein resides in the lamellipodium membrane. The catalysed reaction is K(+)(in) = K(+)(out). It carries out the reaction Na(+)(in) = Na(+)(out). It catalyses the reaction Ca(2+)(in) = Ca(2+)(out). The enzyme catalyses Mg(2+)(in) = Mg(2+)(out). With respect to regulation, regulated by auxillary subunits MDFIC and MDFI. Down-regulated by phosphatidylserines exposed on the cell surface. Divalent ions decrease the single-channel permeability of K(+). Its function is as follows. Pore-forming subunit of the mechanosensitive non-specific cation Piezo channel required for rapidly adapting mechanically activated (MA) currents and has a key role in sensing touch and tactile pain. Piezo channels are homotrimeric three-blade propeller-shaped structures that utilize a cap-motion and plug-and-latch mechanism to gate their ion-conducting pathways. Generates currents characterized by a linear current-voltage relationship that are sensitive to ruthenium red and gadolinium. Conductance to monovalent alkali ions is highest for K(+), intermediate for Na(+) and lowest for Li(+). Divalent ions except for Mn(2+) permeate the channel but more slowly than the monovalent ions and they also reduce K(+) currents. Plays a key role in epithelial cell adhesion by maintaining integrin activation through R-Ras recruitment to the ER, most probably in its activated state, and subsequent stimulation of calpain signaling. In inner ear hair cells, PIEZO1/2 subunits may constitute part of the mechanotransducer (MET) non-selective cation channel complex where they may act as pore-forming ion-conducting component in the complex. In the kidney, may contribute to the detection of intraluminal pressure changes and to urine flow sensing. Acts as a shear-stress sensor that promotes endothelial cell organization and alignment in the direction of blood flow through calpain activation. Plays a key role in blood vessel formation and vascular structure in both development and adult physiology. Acts as a sensor of phosphatidylserine (PS) flipping at the plasma membrane and governs morphogenesis of muscle cells. In myoblasts, flippase-mediated PS enrichment at the inner leaflet of plasma membrane triggers channel activation and Ca(2+) influx followed by Rho GTPases signal transduction, leading to assembly of cortical actomyosin fibers and myotube formation. The chain is Piezo-type mechanosensitive ion channel component 1 from Mus musculus (Mouse).